A 307-amino-acid polypeptide reads, in one-letter code: MLKGRSLIDPMDFTVDELEEIFKLADDIIACPKEYMHAAEGKILATLFYEPSTRTRFSFETAMLRLGGQVVGFSEPNSSSVSKGETIADTIRVVSCYADIAAMRHPKEGAPKVASMYSSIPVINAGDGGHQHPTQTLTDLLTMRRTKKRLSNLTIGMCGDLKFGRTVHSLIKAMSRYDNNKIVLISPDELKVPEYIKKEILDKNNIEYKEAKRIEDVIEELDVLYMTRVQKERFFNEEDYIRLKDSYILNENKLKTAKKDMIILHPLPRVNEISYEVDNDERAYYFKQAKNGMYVRMALMAKLMGVL.

Residues Arg-54 and Thr-55 each coordinate carbamoyl phosphate. Lys-83 provides a ligand contact to L-aspartate. 3 residues coordinate carbamoyl phosphate: Arg-104, His-132, and Gln-135. L-aspartate contacts are provided by Arg-165 and Arg-228. Carbamoyl phosphate contacts are provided by Leu-267 and Pro-268.

Belongs to the aspartate/ornithine carbamoyltransferase superfamily. ATCase family. As to quaternary structure, heterododecamer (2C3:3R2) of six catalytic PyrB chains organized as two trimers (C3), and six regulatory PyrI chains organized as three dimers (R2).

The catalysed reaction is carbamoyl phosphate + L-aspartate = N-carbamoyl-L-aspartate + phosphate + H(+). The protein operates within pyrimidine metabolism; UMP biosynthesis via de novo pathway; (S)-dihydroorotate from bicarbonate: step 2/3. Functionally, catalyzes the condensation of carbamoyl phosphate and aspartate to form carbamoyl aspartate and inorganic phosphate, the committed step in the de novo pyrimidine nucleotide biosynthesis pathway. This Clostridium acetobutylicum (strain ATCC 824 / DSM 792 / JCM 1419 / IAM 19013 / LMG 5710 / NBRC 13948 / NRRL B-527 / VKM B-1787 / 2291 / W) protein is Aspartate carbamoyltransferase catalytic subunit.